The sequence spans 286 residues: MDTHVRGTIRGAIDLMRIGNAVAAGVLTFTGAFVAGGFAVTTAHVTGAVAATIFATAAGNAINDYFDRAIDKINRPMRPIPRGAISERGAIVFSGFLFVAAVVSTSVLPLIAIVLALMNLLALVAYTELFKGLPGVGNAIVAYLTGSTFLFGAAAIGRITDFGVVVLFILAALATATREIIKDIEDLDGDRKEGLQTLPIVIGVTPAYRVATGVLLVAVIASIVPYVIGIFGIWYLTLVVPADMIMLIGVWQAPDNPTQGQQLLKRGMFVAAAAFVVGRAVVVAGI.

Transmembrane regions (helical) follow at residues 21–41 (AVAA…FAVT), 42–62 (TAHV…GNAI), 96–116 (FLFV…IVLA), 133–155 (LPGV…GAAA), 162–181 (FGVV…REII), 214–234 (VLLV…FGIW), 235–255 (YLTL…QAPD), and 266–286 (RGMF…VAGI).

This sequence belongs to the UbiA prenyltransferase family. DGGGP synthase subfamily. Mg(2+) is required as a cofactor.

The protein resides in the cell membrane. The catalysed reaction is sn-3-O-(geranylgeranyl)glycerol 1-phosphate + (2E,6E,10E)-geranylgeranyl diphosphate = 2,3-bis-O-(geranylgeranyl)-sn-glycerol 1-phosphate + diphosphate. It participates in membrane lipid metabolism; glycerophospholipid metabolism. In terms of biological role, prenyltransferase that catalyzes the transfer of the geranylgeranyl moiety of geranylgeranyl diphosphate (GGPP) to the C2 hydroxyl of (S)-3-O-geranylgeranylglyceryl phosphate (GGGP). This reaction is the second ether-bond-formation step in the biosynthesis of archaeal membrane lipids. This Haloquadratum walsbyi (strain DSM 16790 / HBSQ001) protein is Digeranylgeranylglyceryl phosphate synthase.